The following is a 132-amino-acid chain: Small ribosomal subunit protein uS8 (132 aa).

This sequence belongs to the universal ribosomal protein uS8 family. As to quaternary structure, part of the 30S ribosomal subunit. Contacts proteins S5 and S12.

Its function is as follows. One of the primary rRNA binding proteins, it binds directly to 16S rRNA central domain where it helps coordinate assembly of the platform of the 30S subunit. This is Small ribosomal subunit protein uS8 from Bacillus mycoides (strain KBAB4) (Bacillus weihenstephanensis).